An 84-amino-acid chain; its full sequence is Small ribosomal subunit protein bS18B (84 aa).

The protein belongs to the bacterial ribosomal protein bS18 family. Part of the 30S ribosomal subunit. Forms a tight heterodimer with protein bS6.

Functionally, binds as a heterodimer with protein bS6 to the central domain of the 16S rRNA, where it helps stabilize the platform of the 30S subunit. This Mycolicibacterium smegmatis (strain ATCC 700084 / mc(2)155) (Mycobacterium smegmatis) protein is Small ribosomal subunit protein bS18B.